The chain runs to 102 residues: Small ribosomal subunit protein bS20 (102 aa).

It belongs to the bacterial ribosomal protein bS20 family.

In terms of biological role, binds directly to 16S ribosomal RNA. The sequence is that of Small ribosomal subunit protein bS20 from Gloeobacter violaceus (strain ATCC 29082 / PCC 7421).